Consider the following 175-residue polypeptide: Ribosome maturation factor RimM (175 aa).

The PRC barrel domain occupies Glu96 to Phe175.

It belongs to the RimM family. As to quaternary structure, binds ribosomal protein uS19.

It localises to the cytoplasm. An accessory protein needed during the final step in the assembly of 30S ribosomal subunit, possibly for assembly of the head region. Essential for efficient processing of 16S rRNA. May be needed both before and after RbfA during the maturation of 16S rRNA. It has affinity for free ribosomal 30S subunits but not for 70S ribosomes. This Aliivibrio fischeri (strain ATCC 700601 / ES114) (Vibrio fischeri) protein is Ribosome maturation factor RimM.